The sequence spans 40 residues: Accessory gland-specific peptide 57Db (40 aa).

The first 17 residues, 1 to 17 (MKITSALVLLFAGVAFA), serve as a signal peptide directing secretion.

Lumen fluid of male accessory glands, becomes seminal fluid.

The protein resides in the secreted. Its function is as follows. Transferred from male to female during mating and may affect egglaying and behavior after mating. The sequence is that of Accessory gland-specific peptide 57Db (Mst57Db) from Drosophila melanogaster (Fruit fly).